The sequence spans 218 residues: Adenylate kinase (218 aa).

Residue 10-15 (GAGKGT) coordinates ATP. Residues 30-59 (STGDMLRAAVKAGTPLGLQAKAVMDAGQLV) form an NMP region. Residues Thr31, Arg36, 57–59 (QLV), 85–88 (GFPR), and Gln92 each bind AMP. The LID stretch occupies residues 122–159 (GRRSHPASGRTYHVKFNPPKVEGKDDVTGEPLVQREDD). Residues Arg123 and 132–133 (TY) each bind ATP. The tract at residues 127 to 150 (PASGRTYHVKFNPPKVEGKDDVTG) is disordered. The AMP site is built by Arg156 and Arg167. Gly203 serves as a coordination point for ATP.

It belongs to the adenylate kinase family. As to quaternary structure, monomer.

It localises to the cytoplasm. The catalysed reaction is AMP + ATP = 2 ADP. Its pathway is purine metabolism; AMP biosynthesis via salvage pathway; AMP from ADP: step 1/1. In terms of biological role, catalyzes the reversible transfer of the terminal phosphate group between ATP and AMP. Plays an important role in cellular energy homeostasis and in adenine nucleotide metabolism. In Acidovorax ebreus (strain TPSY) (Diaphorobacter sp. (strain TPSY)), this protein is Adenylate kinase.